Reading from the N-terminus, the 320-residue chain is tRNA N6-adenosine threonylcarbamoyltransferase (320 aa).

The Fe cation site is built by H114 and H118. Substrate is bound by residues 136-140 (VVSGG), D169, G182, D186, and N273. D297 is a Fe cation binding site.

This sequence belongs to the KAE1 / TsaD family. It depends on Fe(2+) as a cofactor.

The protein localises to the cytoplasm. It catalyses the reaction L-threonylcarbamoyladenylate + adenosine(37) in tRNA = N(6)-L-threonylcarbamoyladenosine(37) in tRNA + AMP + H(+). Its function is as follows. Required for the formation of a threonylcarbamoyl group on adenosine at position 37 (t(6)A37) in tRNAs that read codons beginning with adenine. Is involved in the transfer of the threonylcarbamoyl moiety of threonylcarbamoyl-AMP (TC-AMP) to the N6 group of A37, together with TsaE and TsaB. TsaD likely plays a direct catalytic role in this reaction. The chain is tRNA N6-adenosine threonylcarbamoyltransferase from Ureaplasma parvum serovar 3 (strain ATCC 27815 / 27 / NCTC 11736).